A 461-amino-acid chain; its full sequence is Diaboline synthase (461 aa).

Active-site proton acceptor residues include His-185 and Asp-400.

The protein belongs to the plant acyltransferase family. As to quaternary structure, monomer.

It localises to the cytoplasm. The catalysed reaction is 17,18-epoxy-17-hydroxycur-19-ene + acetyl-CoA = diaboline + CoA. It functions in the pathway alkaloid biosynthesis. In terms of biological role, acetyltransferase involved in the biosynthesis of curare monoterpene indole alkaloids (MIAs), natural products such as diaboline, a pharmacologically active compound used to regulate blood pressure. Curare alkaloids act as animal glycine receptor antagonists. Catalyzes the conversion of 17,18-epoxy-17-hydroxycur-19-ene (Wieland-Gumlich aldehyde) to diaboline. This Strychnos sp protein is Diaboline synthase.